The sequence spans 399 residues: S-adenosylmethionine synthase (399 aa).

ATP is bound at residue His-15. Asp-17 serves as a coordination point for Mg(2+). Position 43 (Glu-43) interacts with K(+). Residues Glu-56 and Gln-99 each contribute to the L-methionine site. Residues 99 to 109 (QSADIAQGVDN) form a flexible loop region. ATP is bound by residues 174–176 (DGK), 244–245 (RF), Asp-253, 259–260 (RK), Ala-276, and Lys-280. Asp-253 is a binding site for L-methionine. Position 284 (Lys-284) interacts with L-methionine.

Belongs to the AdoMet synthase family. In terms of assembly, homotetramer; dimer of dimers. Mg(2+) serves as cofactor. Requires K(+) as cofactor.

The protein localises to the cytoplasm. The enzyme catalyses L-methionine + ATP + H2O = S-adenosyl-L-methionine + phosphate + diphosphate. It participates in amino-acid biosynthesis; S-adenosyl-L-methionine biosynthesis; S-adenosyl-L-methionine from L-methionine: step 1/1. Its function is as follows. Catalyzes the formation of S-adenosylmethionine (AdoMet) from methionine and ATP. The overall synthetic reaction is composed of two sequential steps, AdoMet formation and the subsequent tripolyphosphate hydrolysis which occurs prior to release of AdoMet from the enzyme. The polypeptide is S-adenosylmethionine synthase (Salinispora tropica (strain ATCC BAA-916 / DSM 44818 / JCM 13857 / NBRC 105044 / CNB-440)).